The primary structure comprises 570 residues: Protein NRT1/ PTR FAMILY 8.2 (570 aa).

Thr99 carries the phosphothreonine modification. A run of 10 helical transmembrane segments spans residues 100-120, 136-156, 182-202, 210-230, 335-355, 370-390, 414-434, 454-474, 493-513, and 537-557; these read IASFVVIYIAGMTLLTISASV, AGQTAITFIALYLIALGTGGI, FFNWFYFVINVGAMIASSVLV, WGWGLGVPTVAMAIAVVFFFA, IWATGIVFASVYSQMGTVFVL, IPSASLSLFDTLSVLFWAPVY, IGIGLVISIFSMVSAGILEVA, IFWQVPQYFLVGCAEVFTFIG, ALSLTAIAFGNYLSTFLVTLV, and YFFWLLAGLSFLNFLVYLWIA.

It belongs to the major facilitator superfamily. Proton-dependent oligopeptide transporter (POT/PTR) (TC 2.A.17) family. Expressed in developing and germinating pollen grains and ovules.

It localises to the cell membrane. In terms of biological role, peptide transporter. Mediates the transport of di- and tripeptides. High affinity transporter. Involved in the uptake of peptides during pollen germination and tube growth. The polypeptide is Protein NRT1/ PTR FAMILY 8.2 (NPF8.2) (Arabidopsis thaliana (Mouse-ear cress)).